The sequence spans 156 residues: Cyanate hydratase (156 aa).

Residues R96, E99, and S122 contribute to the active site.

Belongs to the cyanase family.

It catalyses the reaction cyanate + hydrogencarbonate + 3 H(+) = NH4(+) + 2 CO2. In terms of biological role, catalyzes the reaction of cyanate with bicarbonate to produce ammonia and carbon dioxide. The protein is Cyanate hydratase of Escherichia coli O7:K1 (strain IAI39 / ExPEC).